Reading from the N-terminus, the 325-residue chain is Glycerol-3-phosphate dehydrogenase [NAD(P)+] (325 aa).

NADPH-binding residues include Trp15, Arg35, and Lys107. Sn-glycerol 3-phosphate contacts are provided by Lys107, Gly135, and Ser137. Ala139 provides a ligand contact to NADPH. 5 residues coordinate sn-glycerol 3-phosphate: Lys190, Asp243, Ser253, Arg254, and Asn255. The active-site Proton acceptor is Lys190. Arg254 is an NADPH binding site. NADPH contacts are provided by Leu272 and Glu274.

It belongs to the NAD-dependent glycerol-3-phosphate dehydrogenase family.

Its subcellular location is the cytoplasm. The catalysed reaction is sn-glycerol 3-phosphate + NAD(+) = dihydroxyacetone phosphate + NADH + H(+). The enzyme catalyses sn-glycerol 3-phosphate + NADP(+) = dihydroxyacetone phosphate + NADPH + H(+). Its pathway is membrane lipid metabolism; glycerophospholipid metabolism. In terms of biological role, catalyzes the reduction of the glycolytic intermediate dihydroxyacetone phosphate (DHAP) to sn-glycerol 3-phosphate (G3P), the key precursor for phospholipid synthesis. The protein is Glycerol-3-phosphate dehydrogenase [NAD(P)+] of Afipia carboxidovorans (strain ATCC 49405 / DSM 1227 / KCTC 32145 / OM5) (Oligotropha carboxidovorans).